The following is a 309-amino-acid chain: Taste receptor type 2 member 66 (309 aa).

Position 1 (M1) is a topological domain, extracellular. The helical transmembrane segment at 2–22 threads the bilayer; the sequence is ITFLPIIFSILIVVTFVIGNF. Residues 23-46 are Cytoplasmic-facing; the sequence is ANGFIALANSIEWFKRQKISFADQ. A helical transmembrane segment spans residues 47–67; that stretch reads ILTALAVPRVGLLWVLLLNWY. Over 68–86 the chain is Extracellular; the sequence is ATELNPAFYSIEVRITAYN. Residues 87-107 traverse the membrane as a helical segment; that stretch reads LWAVINHFSNWLATSLSIFYL. Over 108–126 the chain is Cytoplasmic; it reads LKIANFSNLIFLRLKRRVK. Residues 127–147 traverse the membrane as a helical segment; it reads SVVLVILLGPLLFLVCHLFVI. The Extracellular segment spans residues 148–178; the sequence is NMNQIIWTKEYEGNMTWKIKLRSAMYLSNTT. N-linked (GlcNAc...) asparagine glycosylation is found at N161 and N176. Residues 179 to 199 form a helical membrane-spanning segment; it reads VTILANLVPFTVTLISFLLLV. Residues 200–229 lie on the Cytoplasmic side of the membrane; sequence CSLCKHLKKMQLHGKGSQDPSTKVHIKALQ. The helical transmembrane segment at 230-250 threads the bilayer; it reads TVISFLLLCAIYFVSVIISVW. Residues 251–259 lie on the Extracellular side of the membrane; sequence SFKNLENKP. The chain crosses the membrane as a helical span at residues 260–280; sequence VFMFCQAIGFSCSSAHPFILI. The Cytoplasmic segment spans residues 281-309; that stretch reads WGNKKLKQPFLSVLWQMRYWVKGEKPSSS.

This sequence belongs to the G-protein coupled receptor T2R family.

The protein resides in the membrane. In terms of biological role, receptor that may play a role in the perception of bitterness and is gustducin-linked. May play a role in sensing the chemical composition of the gastrointestinal content. The activity of this receptor may stimulate alpha gustducin, mediate PLC-beta-2 activation and lead to the gating of TRPM5. The sequence is that of Taste receptor type 2 member 66 (TAS2R66) from Pan paniscus (Pygmy chimpanzee).